The primary structure comprises 750 residues: Photosystem I P700 chlorophyll a apoprotein A1 (750 aa).

8 helical membrane-spanning segments follow: residues 70-93, 156-179, 195-219, 291-309, 346-369, 385-411, 433-455, and 531-549; these read VFSAHFGQLSIIFLWLSGMYFHGA, LYCTAIGALVFAALMLFAGWFHYH, LNHHLAGLLGLGSLSWAGHQVHVSL, IAHHHLAIAILFLVAGHMY, WHAQLSLNLAMLGSLTIVVAHHMY, LSLFTHHMWIGGFLIVGAAAHAAIFMV, AIISHLNWVCIFLGFHSFGLYIH, and FLVHHIHAFTIHVTVLILL. 2 residues coordinate [4Fe-4S] cluster: cysteine 573 and cysteine 582. The next 2 membrane-spanning stretches (helical) occupy residues 589-610 and 664-686; these read HVFLGLFWMYNAISVVIFHFSW and LSAYGLFFLGAHFVWAFSLMFLF. Histidine 675 provides a ligand contact to chlorophyll a'. Chlorophyll a contacts are provided by methionine 683 and tyrosine 691. Residue tryptophan 692 coordinates phylloquinone. A helical transmembrane segment spans residues 724-744; that stretch reads AVGVTHYLLGGIATTWAFFLA.

Belongs to the PsaA/PsaB family. In terms of assembly, the PsaA/B heterodimer binds the P700 chlorophyll special pair and subsequent electron acceptors. PSI consists of a core antenna complex that captures photons, and an electron transfer chain that converts photonic excitation into a charge separation. The eukaryotic PSI reaction center is composed of at least 11 subunits. P700 is a chlorophyll a/chlorophyll a' dimer, A0 is one or more chlorophyll a, A1 is one or both phylloquinones and FX is a shared 4Fe-4S iron-sulfur center. is required as a cofactor.

It is found in the plastid. Its subcellular location is the chloroplast thylakoid membrane. The enzyme catalyses reduced [plastocyanin] + hnu + oxidized [2Fe-2S]-[ferredoxin] = oxidized [plastocyanin] + reduced [2Fe-2S]-[ferredoxin]. Its function is as follows. PsaA and PsaB bind P700, the primary electron donor of photosystem I (PSI), as well as the electron acceptors A0, A1 and FX. PSI is a plastocyanin-ferredoxin oxidoreductase, converting photonic excitation into a charge separation, which transfers an electron from the donor P700 chlorophyll pair to the spectroscopically characterized acceptors A0, A1, FX, FA and FB in turn. Oxidized P700 is reduced on the lumenal side of the thylakoid membrane by plastocyanin. The protein is Photosystem I P700 chlorophyll a apoprotein A1 of Populus trichocarpa (Western balsam poplar).